A 154-amino-acid chain; its full sequence is MVDVAFVCLGNICRSPMAEAIMRQRLKDRNIHDIKVHSRGTGSWNLGEPPHEGTQKILNKHNIPFDGMISELFEATDDFDYIVAMDQSNVDNIKFINPNLKGQLFKLLEFSNMEESDVPDPYYTNNFEGVYDMVLSSCDNLIDYIVKDANLKEG.

C8 acts as the Nucleophile in catalysis. R14 is an active-site residue. The Proton donor role is filled by D120.

This sequence belongs to the low molecular weight phosphotyrosine protein phosphatase family. Interacts with host CORO1A. Phosphorylations at Tyr-122 and Tyr-123 are essential for phosphatase activity.

The protein resides in the secreted. It carries out the reaction O-phospho-L-tyrosyl-[protein] + H2O = L-tyrosyl-[protein] + phosphate. Secreted tyrosine phosphatase that plays a critical role during infection as a bacterial effector protein that counteracts host defenses. Required for intramacrophage survival. The sequence is that of Low molecular weight protein-tyrosine-phosphatase PtpA (ptpA) from Staphylococcus aureus (strain bovine RF122 / ET3-1).